A 628-amino-acid chain; its full sequence is (+)-alpha pinene synthase 1, chloroplastic (628 aa).

Asp-379, Asp-383, and Asp-531 together coordinate Mg(2+). The DDXXD motif motif lies at 379–383; that stretch reads DDIYD.

Belongs to the terpene synthase family. Tpsd subfamily. The cofactor is Mg(2+). It depends on Mn(2+) as a cofactor.

It is found in the plastid. The protein localises to the chloroplast. It carries out the reaction (2E)-geranyl diphosphate = (1R,5R)-alpha-pinene + diphosphate. It participates in terpene metabolism; oleoresin biosynthesis. Its pathway is secondary metabolite biosynthesis; terpenoid biosynthesis. In terms of biological role, monoterpene synthase (TPS) involved in the biosynthesis of monoterpene natural products included in conifer oleoresin secretions and volatile emissions; these compounds contribute to biotic and abiotic stress defense against herbivores and pathogens. Catalyzes the conversion of (2E)-geranyl diphosphate (GPP) to (+)-alpha-pinene. The polypeptide is (+)-alpha pinene synthase 1, chloroplastic (Pinus contorta (Shore pine)).